The following is a 484-amino-acid chain: ATP synthase subunit beta (484 aa).

Residue 162 to 169 (GGAGVGKT) coordinates ATP.

This sequence belongs to the ATPase alpha/beta chains family. F-type ATPases have 2 components, CF(1) - the catalytic core - and CF(0) - the membrane proton channel. CF(1) has five subunits: alpha(3), beta(3), gamma(1), delta(1), epsilon(1). CF(0) has four main subunits: a(1), b(1), b'(1) and c(9-12).

Its subcellular location is the cellular thylakoid membrane. It catalyses the reaction ATP + H2O + 4 H(+)(in) = ADP + phosphate + 5 H(+)(out). Its function is as follows. Produces ATP from ADP in the presence of a proton gradient across the membrane. The catalytic sites are hosted primarily by the beta subunits. This is ATP synthase subunit beta from Trichodesmium erythraeum (strain IMS101).